We begin with the raw amino-acid sequence, 118 residues long: Ribonuclease P protein component (118 aa).

Belongs to the RnpA family. Consists of a catalytic RNA component (M1 or rnpB) and a protein subunit.

It carries out the reaction Endonucleolytic cleavage of RNA, removing 5'-extranucleotides from tRNA precursor.. RNaseP catalyzes the removal of the 5'-leader sequence from pre-tRNA to produce the mature 5'-terminus. It can also cleave other RNA substrates such as 4.5S RNA. The protein component plays an auxiliary but essential role in vivo by binding to the 5'-leader sequence and broadening the substrate specificity of the ribozyme. This chain is Ribonuclease P protein component, found in Rickettsia typhi (strain ATCC VR-144 / Wilmington).